The sequence spans 316 residues: Methionyl-tRNA formyltransferase (316 aa).

113-116 (SLLP) lines the (6S)-5,6,7,8-tetrahydrofolate pocket.

Belongs to the Fmt family.

The catalysed reaction is L-methionyl-tRNA(fMet) + (6R)-10-formyltetrahydrofolate = N-formyl-L-methionyl-tRNA(fMet) + (6S)-5,6,7,8-tetrahydrofolate + H(+). In terms of biological role, attaches a formyl group to the free amino group of methionyl-tRNA(fMet). The formyl group appears to play a dual role in the initiator identity of N-formylmethionyl-tRNA by promoting its recognition by IF2 and preventing the misappropriation of this tRNA by the elongation apparatus. The sequence is that of Methionyl-tRNA formyltransferase from Sodalis glossinidius (strain morsitans).